A 442-amino-acid chain; its full sequence is Betaine reductase complex component B subunit alpha (442 aa).

As to quaternary structure, heterotetramer of two alpha and two beta subunits. Component of the betaine reductase complex, together with components A and C. PB is substrate specific.

The enzyme catalyses acetyl phosphate + trimethylamine + [thioredoxin]-disulfide + H2O = glycine betaine + [thioredoxin]-dithiol + phosphate + H(+). Functionally, in the first step of betaine reductase, the substrate is bound to component PB via a Schiff base intermediate. Then the PB-activated substrate is nucleophilically attacked by the selenol anion of component PA to transform it to a carboxymethylated selenoether and the respective amine. By action of component PC, acetyl phosphate is formed, leaving component PA in its oxidized state. Finally component PA becomes reduced by the thioredoxin system to start a new catalytic cycle of reductive deamination. This Peptoclostridium acidaminophilum (Eubacterium acidaminophilum) protein is Betaine reductase complex component B subunit alpha (grdI).